Here is a 50-residue protein sequence, read N- to C-terminus: uncharacterized protein (50 aa).

This is an uncharacterized protein from Dryophytes versicolor (chameleon treefrog).